We begin with the raw amino-acid sequence, 313 residues long: Probable cell division protein WhiA (313 aa).

A DNA-binding region (H-T-H motif) is located at residues 275–308; the sequence is SLRELGELAQPPLSKSCVNHRLRKLEQIAEHILA.

This sequence belongs to the WhiA family.

Its function is as follows. Involved in cell division and chromosome segregation. This is Probable cell division protein WhiA from Desulforudis audaxviator (strain MP104C).